Reading from the N-terminus, the 102-residue chain is uncharacterized protein (102 aa).

This is an uncharacterized protein from Escherichia coli (Bacteriophage T4).